The sequence spans 431 residues: Glutamate-1-semialdehyde 2,1-aminomutase (431 aa).

K269 is subject to N6-(pyridoxal phosphate)lysine.

This sequence belongs to the class-III pyridoxal-phosphate-dependent aminotransferase family. HemL subfamily. Homodimer. Pyridoxal 5'-phosphate serves as cofactor.

The protein resides in the cytoplasm. It catalyses the reaction (S)-4-amino-5-oxopentanoate = 5-aminolevulinate. Its pathway is porphyrin-containing compound metabolism; protoporphyrin-IX biosynthesis; 5-aminolevulinate from L-glutamyl-tRNA(Glu): step 2/2. This Tolumonas auensis (strain DSM 9187 / NBRC 110442 / TA 4) protein is Glutamate-1-semialdehyde 2,1-aminomutase.